The following is a 247-amino-acid chain: MAGHSKWANTKHRKAAQDAKRGKIFTKIIRELVTAARLGGGDPGANPRLRAAIDKALSNNMTRDTLNRAIARGVGGDEDNNMETIIYEGYGPGGTAVMVECLSDNRNRTVSEVRHAFTKTGGNLGTDGSVSYLFTKKGVISYAPGLEEDTVMDAALEAGADDIVVYDDGAIDVFTAWESLGAVKDVLDATGLVAEGAEVSLIPSTKAELDAETAPKLLRLIDMLEDSDDVQEVYHNGEISDEVAATL.

This sequence belongs to the TACO1 family.

The protein resides in the cytoplasm. This chain is Probable transcriptional regulatory protein YPK_2146, found in Yersinia pseudotuberculosis serotype O:3 (strain YPIII).